Reading from the N-terminus, the 468-residue chain is 6-phospho-beta-galactosidase (468 aa).

Positions 19, 116, 159, 160, and 297 each coordinate D-galactose 6-phosphate. E160 acts as the Proton donor in catalysis. Residue E375 is the Nucleophile of the active site. Positions 428, 429, 435, and 437 each coordinate D-galactose 6-phosphate.

It belongs to the glycosyl hydrolase 1 family.

The enzyme catalyses a 6-phospho-beta-D-galactoside + H2O = D-galactose 6-phosphate + an alcohol. It participates in carbohydrate metabolism; lactose degradation; D-galactose 6-phosphate and beta-D-glucose from lactose 6-phosphate: step 1/1. The sequence is that of 6-phospho-beta-galactosidase from Streptococcus pyogenes serotype M5 (strain Manfredo).